The primary structure comprises 68 residues: MSYQEQQCKQLCQPLPVCPPPKPCSPPKCPEPCPPPKCPETCPPQPCQRKCPPVLEAPCQQKCPSKSK.

The stretch at 21-26 (PKPCSP) is one 1; truncated repeat. The segment at 21-65 (PKPCSPPKCPEPCPPPKCPETCPPQPCQRKCPPVLEAPCQQKCPS) is 3.5 X 9 AA approximate tandem repeats. 3 repeat units span residues 27-35 (PKCPEPCPP), 36-44 (PKCPETCPP), and 45-53 (QPCQRKCPP).

Belongs to the cornifin (SPRR) family. As to expression, not expressed in uterus.

It localises to the cytoplasm. In terms of biological role, cross-linked envelope protein of keratinocytes. It is a keratinocyte protein that first appears in the cell cytosol, but ultimately becomes cross-linked to membrane proteins by transglutaminase. All that results in the formation of an insoluble envelope beneath the plasma membrane. This chain is Small proline-rich protein 2K (Sprr2k), found in Mus musculus (Mouse).